The primary structure comprises 124 residues: MIVGLGVDIVELARIEKSLTRFGRRFAEKVLSPEEMAAMPTLTVNYIAGRFAVKEAAVKALGTGFSQGIGPTLVETVATSGGKPQLRLHGAALQCARDLGVTSCHVSISHDRSSAVAVVVLEAL.

Positions 8 and 55 each coordinate Mg(2+).

It belongs to the P-Pant transferase superfamily. AcpS family. It depends on Mg(2+) as a cofactor.

It localises to the cytoplasm. The catalysed reaction is apo-[ACP] + CoA = holo-[ACP] + adenosine 3',5'-bisphosphate + H(+). Its function is as follows. Transfers the 4'-phosphopantetheine moiety from coenzyme A to a Ser of acyl-carrier-protein. This chain is Holo-[acyl-carrier-protein] synthase, found in Desulfovibrio desulfuricans (strain ATCC 27774 / DSM 6949 / MB).